The sequence spans 932 residues: Protocadherin gamma-A8 (932 aa).

Positions 1–29 (MAAPQSRPRRGELILLCALLGTLWEIGRG) are cleaved as a signal peptide. 6 Cadherin domains span residues 30 to 133 (QIRY…NPKF), 134 to 242 (QVED…APVF), 243 to 347 (PHPI…RPEV), 348 to 452 (IITS…PPTF), 453 to 562 (PHAS…APEI), and 570 to 682 (DGST…KPSV). The Extracellular portion of the chain corresponds to 30-692 (QIRYSVPEET…DPNDSSLTLY (663 aa)). Asn-47 carries an N-linked (GlcNAc...) asparagine glycan. N-linked (GlcNAc...) asparagine glycans are attached at residues Asn-414, Asn-419, and Asn-545. Residue Asn-685 is glycosylated (N-linked (GlcNAc...) asparagine). A helical membrane pass occupies residues 693–713 (LVVAVAAISCVFLAFVAVLLG). Topologically, residues 714–932 (LRLRRWHKSH…KKKSGKKEKK (219 aa)) are cytoplasmic. 2 disordered regions span residues 804-841 (ADHG…WPNN) and 902-932 (ATLT…KEKK). The segment covering 810–841 (APPNTDWRFSQAQRPGTSGSQNGDDTGTWPNN) has biased composition (polar residues). The segment covering 922 to 932 (NKKKSGKKEKK) has biased composition (basic residues).

The protein localises to the cell membrane. Functionally, potential calcium-dependent cell-adhesion protein. May be involved in the establishment and maintenance of specific neuronal connections in the brain. This chain is Protocadherin gamma-A8 (PCDHGA8), found in Pan troglodytes (Chimpanzee).